Consider the following 66-residue polypeptide: Large ribosomal subunit protein bL35 (66 aa).

The span at 1-46 (MPKMKTHRASAKRFKRTANGGLKRHHAFTGHRFHGKTKKQRRHLRK) shows a compositional bias: basic residues. Residues 1–52 (MPKMKTHRASAKRFKRTANGGLKRHHAFTGHRFHGKTKKQRRHLRKPAMVSR) are disordered.

It belongs to the bacterial ribosomal protein bL35 family.

The polypeptide is Large ribosomal subunit protein bL35 (Lactobacillus acidophilus (strain ATCC 700396 / NCK56 / N2 / NCFM)).